Reading from the N-terminus, the 565-residue chain is Periplasmic trehalase (565 aa).

Residues 1 to 30 form the signal peptide; it reads MKSPAPSRPQKMALIPACIFLCFAALSVQA. Substrate is bound by residues Arg152, 159–160, Asn196, 205–207, 277–279, and Gly310; these read WD, RSQ, and RPE. Catalysis depends on proton donor/acceptor residues Asp312 and Glu496. Glu511 contributes to the substrate binding site. A disordered region spans residues 539–565; the sequence is CDNVPATRPLSESTTQPVKPKEAEPTL.

Belongs to the glycosyl hydrolase 37 family. In terms of assembly, monomer.

Its subcellular location is the periplasm. It catalyses the reaction alpha,alpha-trehalose + H2O = alpha-D-glucose + beta-D-glucose. Provides the cells with the ability to utilize trehalose at high osmolarity by splitting it into glucose molecules that can subsequently be taken up by the phosphotransferase-mediated uptake system. The chain is Periplasmic trehalase from Shigella dysenteriae serotype 1 (strain Sd197).